A 375-amino-acid polypeptide reads, in one-letter code: Serpin B5 (375 aa).

Residues asparagine 133, asparagine 298, and asparagine 361 are each glycosylated (N-linked (GlcNAc...) asparagine).

This sequence belongs to the serpin family. Ov-serpin subfamily. Interacts with IRF6.

It is found in the secreted. It localises to the extracellular space. Its function is as follows. Tumor suppressor. It blocks the growth, invasion, and metastatic properties of mammary tumors. As it does not undergo the S (stressed) to R (relaxed) conformational transition characteristic of active serpins, it exhibits no serine protease inhibitory activity. This Mus musculus (Mouse) protein is Serpin B5 (Serpinb5).